Reading from the N-terminus, the 403-residue chain is MASWAEPSEPAAQLLCGAPLLEGFEVLDGVDDAEEEDDLSGLPPLEDMGQPTVEEAEQPGALAREFLAATEPEPAPAPAPEEWLDILGNGLLRKKTLVPGPTGSSRPLKGQVVTVHLQMSLENGTRVQEEPELAFTLGDCDVIQALDLSVPLMHVGETAMVTADSKYCYGPQGSRSPYIPPHAALCLEVTLKTAEDGPDLEMLSGQERVALANRKRECGNAHYQRADFVLAANSYDLAIKAITSNAKVDMTCEEEEELLQLKVKCLNNLAASQLKLDHYRAALRSCSQVLEHQPDNIKALFRKGKVLAQQGEYSEAIPILRAALKLEPSNKTIHAELSKLVKKRAAQRSTETALYRKMLGNPSRLPAKCPGKGAWSIPWKWLFGATAVALGGVALSVVIAARN.

The disordered stretch occupies residues 26–54 (VLDGVDDAEEEDDLSGLPPLEDMGQPTVE). Over residues 28–39 (DGVDDAEEEDDL) the composition is skewed to acidic residues. The region spanning 110–195 (GQVVTVHLQM…CLEVTLKTAE (86 aa)) is the PPIase FKBP-type domain. Residues 212–245 (ANRKRECGNAHYQRADFVLAANSYDLAIKAITSN) form a TPR 1 repeat. Glycyl lysine isopeptide (Lys-Gly) (interchain with G-Cter in ubiquitin) cross-links involve residues lysine 240, lysine 262, lysine 264, and lysine 275. 2 TPR repeats span residues 263-296 (VKCLNNLAASQLKLDHYRAALRSCSQVLEHQPDN) and 297-330 (IKALFRKGKVLAQQGEYSEAIPILRAALKLEPSN). At serine 287 the chain carries Phosphoserine. Residues lysine 298, lysine 305, lysine 325, lysine 331, lysine 339, lysine 342, and lysine 343 each participate in a glycyl lysine isopeptide (Lys-Gly) (interchain with G-Cter in ubiquitin) cross-link. A helical membrane pass occupies residues 381-401 (WLFGATAVALGGVALSVVIAA).

As to quaternary structure, homomultimers or heteromultimers (Potential). Forms heterodimer with calmodulin. When activated by calmodulin and calcium, interacts with the BH4 domain of BCL2 and weakly with BCLX isoform Bcl-X(L). Does not bind and inhibit calcineurin. Interacts with ZFYVE27; may negatively regulate ZFYVE27 phosphorylation. Requires Ca(2+) as cofactor. In terms of processing, ubiquitinated by PRKN during mitophagy, leading to its degradation and enhancement of mitophagy. Deubiquitinated by USP30.

Its subcellular location is the mitochondrion membrane. The enzyme catalyses [protein]-peptidylproline (omega=180) = [protein]-peptidylproline (omega=0). Functionally, constitutively inactive PPiase, which becomes active when bound to calmodulin and calcium. Seems to act as a chaperone for BCL2, targets it to the mitochondria and modulates its phosphorylation state. The BCL2/FKBP8/calmodulin/calcium complex probably interferes with the binding of BCL2 to its targets. The active form of FKBP8 may therefore play a role in the regulation of apoptosis. This chain is Peptidyl-prolyl cis-trans isomerase FKBP8 (Fkbp8), found in Rattus norvegicus (Rat).